Consider the following 596-residue polypeptide: UvrABC system protein C (596 aa).

Residues 14–91 (QQPGCYLMKD…IKKYDPRYNV (78 aa)) form the GIY-YIG domain. The UVR domain occupies 196–231 (KDIRKNLAGEMQKASEALNFERAKEIRDTIQHIDAT).

It belongs to the UvrC family. As to quaternary structure, interacts with UvrB in an incision complex.

It is found in the cytoplasm. Its function is as follows. The UvrABC repair system catalyzes the recognition and processing of DNA lesions. UvrC both incises the 5' and 3' sides of the lesion. The N-terminal half is responsible for the 3' incision and the C-terminal half is responsible for the 5' incision. This is UvrABC system protein C from Oceanobacillus iheyensis (strain DSM 14371 / CIP 107618 / JCM 11309 / KCTC 3954 / HTE831).